Consider the following 620-residue polypeptide: 1-deoxy-D-xylulose-5-phosphate synthase (620 aa).

Thiamine diphosphate contacts are provided by residues His80 and 121–123; that span reads GHS. Asp152 contacts Mg(2+). Residues 153–154, Asn181, Tyr288, and Glu370 contribute to the thiamine diphosphate site; that span reads GA. Mg(2+) is bound at residue Asn181.

Belongs to the transketolase family. DXPS subfamily. As to quaternary structure, homodimer. It depends on Mg(2+) as a cofactor. The cofactor is thiamine diphosphate.

It carries out the reaction D-glyceraldehyde 3-phosphate + pyruvate + H(+) = 1-deoxy-D-xylulose 5-phosphate + CO2. Its pathway is metabolic intermediate biosynthesis; 1-deoxy-D-xylulose 5-phosphate biosynthesis; 1-deoxy-D-xylulose 5-phosphate from D-glyceraldehyde 3-phosphate and pyruvate: step 1/1. In terms of biological role, catalyzes the acyloin condensation reaction between C atoms 2 and 3 of pyruvate and glyceraldehyde 3-phosphate to yield 1-deoxy-D-xylulose-5-phosphate (DXP). The sequence is that of 1-deoxy-D-xylulose-5-phosphate synthase from Salmonella agona (strain SL483).